Consider the following 290-residue polypeptide: RxLR effector protein Avr4 (290 aa).

The signal sequence occupies residues 1-24; it reads MRSLHILLVITASLLASLAVSAEA. The interval 33 to 56 is disordered; sequence VVENNKDKSRFLRDGGTTEAQTDE. Positions 36 to 45 are enriched in basic and acidic residues; it reads NNKDKSRFLR. The short motif at 42-58 is the RxLR-dEER element; that stretch reads RFLRDGGTTEAQTDEER. The interval 118–141 is W1 motif; it reads KYERMQWQKLNEGQTLTYMRVGDR. The segment at 151-174 is W2 motif; that stretch reads QLLRWVAQKKTVKSVYDDLQIEGF. Residues 224–247 form a W3 motif region; it reads VFEKWAMEGTHIKSVIKTLNLNNK. Asn246 carries an N-linked (GlcNAc...) asparagine glycan. The tract at residues 249–270 is y motif; it reads ASEMANNENFPALLKYVKLYLD.

Belongs to the RxLR effector family.

The protein resides in the secreted. The protein localises to the host cytoplasm. Its subcellular location is the host nucleus. It localises to the host nucleolus. It is found in the host cytoskeleton. Secreted effector that acts as an elicitor of hypersensitive response (HR) specifically on plants carrying defense protein R4, through its interaction with this protein. This chain is RxLR effector protein Avr4, found in Phytophthora mirabilis.